We begin with the raw amino-acid sequence, 350 residues long: Glycerol-1-phosphate dehydrogenase [NAD(P)+] (350 aa).

NAD(+)-binding positions include 96–100 (GNIID) and 118–121 (TAPS). Aspartate 123 serves as a coordination point for substrate. Serine 127 provides a ligand contact to NAD(+). Aspartate 170 is a substrate binding site. 2 residues coordinate Zn(2+): aspartate 170 and histidine 250. Histidine 254 contacts substrate. Histidine 266 serves as a coordination point for Zn(2+).

This sequence belongs to the glycerol-1-phosphate dehydrogenase family. In terms of assembly, homodimer. Zn(2+) serves as cofactor.

The protein resides in the cytoplasm. The catalysed reaction is sn-glycerol 1-phosphate + NAD(+) = dihydroxyacetone phosphate + NADH + H(+). The enzyme catalyses sn-glycerol 1-phosphate + NADP(+) = dihydroxyacetone phosphate + NADPH + H(+). It functions in the pathway membrane lipid metabolism; glycerophospholipid metabolism. Catalyzes the NAD(P)H-dependent reduction of dihydroxyacetonephosphate (DHAP or glycerone phosphate) to glycerol 1-phosphate (G1P). The G1P thus generated is used as the glycerophosphate backbone of phospholipids in the cellular membranes of Archaea. The protein is Glycerol-1-phosphate dehydrogenase [NAD(P)+] of Sulfurisphaera tokodaii (strain DSM 16993 / JCM 10545 / NBRC 100140 / 7) (Sulfolobus tokodaii).